The primary structure comprises 250 residues: GTP cyclohydrolase 1 type 2 homolog (250 aa).

Positions 63, 64, 100, 218, and 222 each coordinate a divalent metal cation.

Belongs to the GTP cyclohydrolase I type 2/NIF3 family. In terms of assembly, homohexamer.

In Pyrococcus horikoshii (strain ATCC 700860 / DSM 12428 / JCM 9974 / NBRC 100139 / OT-3), this protein is GTP cyclohydrolase 1 type 2 homolog.